A 171-amino-acid polypeptide reads, in one-letter code: Endoribonuclease YbeY (171 aa).

Zn(2+) is bound by residues histidine 130, histidine 134, and histidine 140.

This sequence belongs to the endoribonuclease YbeY family. Zn(2+) is required as a cofactor.

The protein resides in the cytoplasm. Functionally, single strand-specific metallo-endoribonuclease involved in late-stage 70S ribosome quality control and in maturation of the 3' terminus of the 16S rRNA. This is Endoribonuclease YbeY from Neisseria meningitidis serogroup C / serotype 2a (strain ATCC 700532 / DSM 15464 / FAM18).